The sequence spans 1503 residues: DNA-directed RNA polymerase subunit beta' (1503 aa).

Residues Cys60, Cys62, Cys75, and Cys78 each coordinate Zn(2+). 3 residues coordinate Mg(2+): Asp626, Asp628, and Asp630. Residues Cys1002, Cys1075, Cys1082, and Cys1085 each coordinate Zn(2+). Residues 1439 to 1503 (EESQQAEEAP…EEEDNDLPAF (65 aa)) are disordered. Over residues 1486-1503 (GDNDQSDAEEEDNDLPAF) the composition is skewed to acidic residues.

Belongs to the RNA polymerase beta' chain family. The RNAP catalytic core consists of 2 alpha, 1 beta, 1 beta' and 1 omega subunit. When a sigma factor is associated with the core the holoenzyme is formed, which can initiate transcription. It depends on Mg(2+) as a cofactor. Zn(2+) is required as a cofactor.

It carries out the reaction RNA(n) + a ribonucleoside 5'-triphosphate = RNA(n+1) + diphosphate. Its function is as follows. DNA-dependent RNA polymerase catalyzes the transcription of DNA into RNA using the four ribonucleoside triphosphates as substrates. This is DNA-directed RNA polymerase subunit beta' from Chloroflexus aurantiacus (strain ATCC 29364 / DSM 637 / Y-400-fl).